The following is a 367-amino-acid chain: Inactive serine protease 39 (367 aa).

An N-terminal signal peptide occupies residues 1-31 (MWGSRAQQSGPDRGGACLLAAFLLCFSLLHA). One can recognise a Peptidase S1 domain in the interval 68 to 312 (IYGGQIAKAE…FSDWIKQKKA (245 aa)). 4 disulfide bridges follow: Cys93–Cys109, Cys192–Cys269, Cys225–Cys248, and Cys259–Cys287.

This sequence belongs to the peptidase S1 family. As to expression, expressed in testis. More specifically, abundantly expressed in the haploid round spermatid.

Its subcellular location is the cytoplasmic vesicle. It localises to the secretory vesicle. It is found in the acrosome. The protein localises to the secreted. Its function is as follows. May play an important role in the sperm/egg interaction; released during the acrosome reaction. This chain is Inactive serine protease 39 (Prss39), found in Mus musculus (Mouse).